The primary structure comprises 263 residues: Polyglutamine-binding protein 1 (263 aa).

Positions E46 to D80 constitute a WW domain. S94 is subject to Phosphoserine. The segment at S94–D263 is disordered. Basic and acidic residues predominate over residues A99–E173. Tandem repeats lie at residues D104 to S110, D111 to S117, D118 to S124, D125 to S131, E132 to S138, D139 to R140, D141 to R142, E143 to R144, D150 to R151, E152 to R153, E154 to R155, D156 to R157, D158 to R159, and D160 to R161. The 5 X 7 AA approximate tandem repeats of D-R-[SG]-H-D-K-S stretch occupies residues D104–S138. Positions D139 to R144 are 3 X 2 AA tandem repeats of [DE]-R. A 6 X 2 AA tandem repeats of [DE]-R region spans residues D150–R161. The important for interaction with TXNL4A stretch occupies residues Y243–N253. Phosphoserine is present on S245.

Interacts with POU3F2/Brn-2, ATXN1, TXNL4A, HTT and AR. Interaction with ATXN1 correlates positively with the length of the polyglutamine tract. Interacts with RNA polymerase II large subunit in a phosphorylation-dependent manner. Forms a ternary complex with ATXN1 mutant and phosphorylated RNA polymerase II. Interacts (via C-terminus) with TXNL4A and CD2BP2. Interacts (via WW domain) with ATN1 and SF3B1, and may interact with additional splice factors. Interacts (via WW domain) with WBP11; Leading to reduce interaction between PQBP1 and TXNL4A. Interacts with CAPRIN1. Interacts with DDX1. Interacts with SFPQ. Interacts with KHSRP.

The protein resides in the nucleus. It localises to the nucleus speckle. Its subcellular location is the cytoplasmic granule. Intrinsically disordered protein that acts as a scaffold, and which is involved in different processes, such as pre-mRNA splicing, transcription regulation, innate immunity and neuron development. Interacts with splicing-related factors via the intrinsically disordered region and regulates alternative splicing of target pre-mRNA species. May suppress the ability of POU3F2 to transactivate the DRD1 gene in a POU3F2 dependent manner. Can activate transcription directly or via association with the transcription machinery. May be involved in ATXN1 mutant-induced cell death. The interaction with ATXN1 mutant reduces levels of phosphorylated RNA polymerase II large subunit. Involved in the assembly of cytoplasmic stress granule, possibly by participating in the transport of neuronal RNA granules. Also acts as an innate immune sensor of infection by retroviruses, by detecting the presence of reverse-transcribed DNA in the cytosol. Directly binds retroviral reverse-transcribed DNA in the cytosol and interacts with CGAS, leading to activate the cGAS-STING signaling pathway, triggering type-I interferon production. The protein is Polyglutamine-binding protein 1 (PQBP1) of Bos taurus (Bovine).